Here is a 121-residue protein sequence, read N- to C-terminus: Estrogen receptor (121 aa).

The NR LBD domain occupies 1 to 121; it reads LFAPNLLLDR…IRHMSNKGME (121 aa). Cysteine 45 carries the S-palmitoyl cysteine lipid modification.

It belongs to the nuclear hormone receptor family. NR3 subfamily. As to quaternary structure, binds DNA as a homodimer. Can form a heterodimer with ESR2. Interacts with coactivator NCOA5. Interacts with NCOA7; the interaction is ligand-inducible. Interacts with AKAP13, CUEDC2, HEXIM1, KDM5A, MAP1S, PELP1, SMARD1, and UBE1C. Interacts with MUC1; the interaction is stimulated by 7 beta-estradiol (E2) and enhances ERS1-mediated transcription. Interacts with DNTTIP2, and UIMC1. Interacts with KMT2D/MLL2. Interacts with ATAD2; the interaction is enhanced by estradiol. Interacts with KIF18A and LDB1. Interacts with RLIM (via its C-terminus). Interacts with MACROD1. Interacts with SH2D4A and PLCG. Interacts with SH2D4A; the interaction blocks binding to PLCG and inhibits estrogen-induced cell proliferation. Interacts with DYNLL1. Interacts with CCDC62; the interaction requires estradiol and appears to enhance the transcription of target genes. Interacts with NR2C1; the interaction prevents homodimerization of ESR1 and suppresses its transcriptional activity and cell growth. Interacts with DNAAF4. Interacts with PRMT2. Interacts with PI3KR1 or PIK3R2, SRC and PTK2/FAK1. Interacts with RBFOX2. Interacts with EP300; the interaction is estrogen-dependent and enhanced by CITED1. Interacts with CITED1; the interaction is estrogen-dependent. Interacts with FAM120B, FOXL2, PHB2 and SLC30A9. Interacts with coactivators NCOA3 and NCOA6. Interacts with STK3/MST2 only in the presence of SAV1 and vice-versa. Binds to CSNK1D. Interacts with NCOA2; NCOA2 can interact with ESR1 AF-1 and AF-2 domains simultaneously and mediate their transcriptional synergy. Interacts with DDX5. Interacts with NCOA1; the interaction seems to require a self-association of N-terminal and C-terminal regions. Interacts with ZNF366, DDX17, NFKB1, RELA, SP1 and SP3. Interacts with NRIP1. Interacts with GPER1; the interaction occurs in an estrogen-dependent manner. Interacts with CLOCK and the interaction is stimulated by estrogen. Interacts with TRIP4 (ufmylated); estrogen dependent. Interacts with LMTK3; the interaction phosphorylates ESR1 (in vitro) and protects it against proteasomal degradation. Interacts with CCAR2 (via N-terminus) in a ligand-independent manner. Interacts with ZFHX3. Interacts with SFR1 in a ligand-dependent and -independent manner. Interacts with DCAF13, LATS1 and DCAF1; regulates ESR1 ubiquitination and ubiquitin-mediated proteasomal degradation. Interacts (via DNA-binding domain) with POU4F2 (C-terminus); this interaction increases the estrogen receptor ESR1 transcriptional activity in a DNA- and ligand 17-beta-estradiol-independent manner. Interacts with ESRRB isoform 1. Interacts with UBE3A and WBP2. Interacts with GTF2B. Interacts with RBM39. In the absence of hormonal ligand, interacts with TACC1. Interacts with BAG1; the interaction is promoted in the absence of estradiol (17-beta-estradiol/E2). Interacts with and ubiquitinated by STUB1; the interaction is promoted in the absence of estradiol (17-beta-estradiol/E2). Interacts with NEDD8. In terms of processing, ubiquitinated; regulated by LATS1 via DCAF1 it leads to ESR1 proteasomal degradation. Deubiquitinated by OTUB1. Ubiquitinated by STUB1/CHIP; in the CA1 hippocampal region following loss of endogenous circulating estradiol (17-beta-estradiol/E2). Ubiquitinated by UBR5, leading to its degradation: UBR5 specifically recognizes and binds ligand-bound ESR1 when it is not associated with coactivators (NCOAs). In presence of NCOAs, the UBR5-degron is not accessible, preventing its ubiquitination and degradation. Palmitoylated at Cys-45 by ZDHHC7 and ZDHHC21. Palmitoylation is required for plasma membrane targeting and for rapid intracellular signaling via ERK and AKT kinases and cAMP generation, but not for signaling mediated by the nuclear hormone receptor. Post-translationally, phosphorylated by cyclin A/CDK2 and CK1. Phosphorylation probably enhances transcriptional activity. Dephosphorylation by PPP5C inhibits its transactivation activity. Phosphorylated by LMTK3 (in vitro). In terms of processing, dimethylated by PRMT1. Demethylated by JMJD6.

It is found in the nucleus. The protein localises to the cytoplasm. Its subcellular location is the golgi apparatus. The protein resides in the cell membrane. In terms of biological role, nuclear hormone receptor. The steroid hormones and their receptors are involved in the regulation of eukaryotic gene expression and affect cellular proliferation and differentiation in target tissues. Ligand-dependent nuclear transactivation involves either direct homodimer binding to a palindromic estrogen response element (ERE) sequence or association with other DNA-binding transcription factors, such as AP-1/c-Jun, c-Fos, ATF-2, Sp1 and Sp3, to mediate ERE-independent signaling. Ligand binding induces a conformational change allowing subsequent or combinatorial association with multiprotein coactivator complexes through LXXLL motifs of their respective components. Mutual transrepression occurs between the estrogen receptor (ER) and NF-kappa-B in a cell-type specific manner. Decreases NF-kappa-B DNA-binding activity and inhibits NF-kappa-B-mediated transcription from the IL6 promoter and displace RELA/p65 and associated coregulators from the promoter. Recruited to the NF-kappa-B response element of the CCL2 and IL8 promoters and can displace CREBBP. Present with NF-kappa-B components RELA/p65 and NFKB1/p50 on ERE sequences. Can also act synergistically with NF-kappa-B to activate transcription involving respective recruitment adjacent response elements; the function involves CREBBP. Can activate the transcriptional activity of TFF1. Also mediates membrane-initiated estrogen signaling involving various kinase cascades. Essential for MTA1-mediated transcriptional regulation of BRCA1 and BCAS3. Maintains neuronal survival in response to ischemic reperfusion injury when in the presence of circulating estradiol (17-beta-estradiol/E2). The chain is Estrogen receptor (ESR1) from Macaca mulatta (Rhesus macaque).